The following is a 216-amino-acid chain: Sugar fermentation stimulation protein homolog (216 aa).

It belongs to the SfsA family.

The protein is Sugar fermentation stimulation protein homolog of Thermoplasma volcanium (strain ATCC 51530 / DSM 4299 / JCM 9571 / NBRC 15438 / GSS1).